Here is a 397-residue protein sequence, read N- to C-terminus: Elongation factor Tu (397 aa).

The 197-residue stretch at 10 to 206 folds into the tr-type G domain; that stretch reads KPHVNIGTIG…AVDDNVPEPE (197 aa). The tract at residues 19–26 is G1; the sequence is GHVDHGKT. 19 to 26 is a GTP binding site; that stretch reads GHVDHGKT. Mg(2+) is bound at residue Thr26. Residues 62-66 form a G2 region; the sequence is GITIN. The segment at 83 to 86 is G3; sequence DAPG. Residues 83–87 and 138–141 each bind GTP; these read DAPGH and NKSD. The tract at residues 138–141 is G4; that stretch reads NKSD. The interval 176 to 178 is G5; it reads SAL.

Belongs to the TRAFAC class translation factor GTPase superfamily. Classic translation factor GTPase family. EF-Tu/EF-1A subfamily. Monomer.

It is found in the cytoplasm. The catalysed reaction is GTP + H2O = GDP + phosphate + H(+). GTP hydrolase that promotes the GTP-dependent binding of aminoacyl-tRNA to the A-site of ribosomes during protein biosynthesis. The chain is Elongation factor Tu from Brevibacterium linens.